The sequence spans 258 residues: MKLVYSTDCEYHIGLKASDIGHYVILPGDPARSEKIAQHFSHPHKVGHNREYVTYTGTLCETPVSVMSTGIGGPSTAIGVEELIHLGAHTFIRVGTSGGMQPDILAGTVVIATGAIRFEGTSKEYAPVEFPAVPDFTVTAALKHAAEDVQVRHALGVVQCKDNFYGQHSPHTMPVHAELTQKWHAWIACNTLASEMESAALFVLGSVRRVRTGAVLLVIGNQTRRAQGLEDIQVHDTENAIRVAVEAVKLLITQDSPR.

Belongs to the PNP/UDP phosphorylase family.

The protein localises to the cytoplasm. It carries out the reaction uridine + phosphate = alpha-D-ribose 1-phosphate + uracil. Its pathway is pyrimidine metabolism; UMP biosynthesis via salvage pathway; uracil from uridine (phosphorylase route): step 1/1. Catalyzes the reversible phosphorylytic cleavage of uridine to uracil and ribose-1-phosphate. The protein is Uridine phosphorylase (udp) of Treponema pallidum (strain Nichols).